The chain runs to 104 residues: DNA-directed RNA polymerase subunit Rpo13 (104 aa).

Disordered stretches follow at residues 1–34 (MVSGMSTEEEKEGTNDEEVSEEREVEETSEEEFP) and 76–104 (EKRDSRRKAKKAASKKVKKTKKKEKSVEG). The span at 7-31 (TEEEKEGTNDEEVSEEREVEETSEE) shows a compositional bias: acidic residues. Glu32 serves as a coordination point for DNA. Over residues 80–104 (SRRKAKKAASKKVKKTKKKEKSVEG) the composition is skewed to basic residues. The tract at residues 81-104 (RRKAKKAASKKVKKTKKKEKSVEG) is required to bind DNA.

The protein belongs to the archaeal Rpo13 RNA polymerase subunit family. In terms of assembly, part of the 13-subunit RNA polymerase complex. Rpo1N and Rpo5 form a cleft which docks Rpo13. Forms predominantly dimers in solution, although monomers and trimers can also be seen. Found associated with RNAP but also as a homodimer pool in the cytoplasm in vivo.

It is found in the cytoplasm. The catalysed reaction is RNA(n) + a ribonucleoside 5'-triphosphate = RNA(n+1) + diphosphate. Functionally, DNA-dependent RNA polymerase (RNAP) catalyzes the transcription of DNA into RNA using the four ribonucleoside triphosphates as substrates. A molten-globule protein, it binds dsDNA in the RNAP, in vitro binds dsDNA but not ssDNA. Its position in RNAP implies it functions in both transcription initiation and elongation. This chain is DNA-directed RNA polymerase subunit Rpo13, found in Saccharolobus shibatae (strain ATCC 51178 / DSM 5389 / JCM 8931 / NBRC 15437 / B12) (Sulfolobus shibatae).